The chain runs to 468 residues: Procollagen C-endopeptidase enhancer 1 (468 aa).

Residues 1-24 form the signal peptide; the sequence is MLPAALTSLLGPFLLAWVLPLARG. Residue N28 is glycosylated (N-linked (GlcNAc...) asparagine). 4 disulfide bridges follow: C36/C62, C89/C111, C158/C185, and C212/C235. 2 CUB domains span residues 36–148 and 158–272; these read CGGD…YSGR and CGGR…YRTL. Residue T41 is modified to Phosphothreonine. Residue S49 is modified to Phosphoserine. The interval 271–341 is disordered; sequence TLPRDAVEKE…VAPDAPSITC (71 aa). Basic and acidic residues predominate over residues 272-281; it reads LPRDAVEKES. 2 cysteine pairs are disulfide-bonded: C341–C409 and C356–C460. Residues 341–460 form the NTR domain; it reads CPKQYKRSGT…ILSNLSKRKC (120 aa). N454 carries an N-linked (GlcNAc...) asparagine glycan.

Interacts with EFEMP2. In terms of tissue distribution, expressed at highest levels in collagen-rich tissues, especially tendon. Also expressed in cornea and sterna.

It is found in the secreted. Binds to the C-terminal propeptide of type I procollagen and enhances procollagen C-proteinase activity. In Rattus norvegicus (Rat), this protein is Procollagen C-endopeptidase enhancer 1 (Pcolce).